The following is a 286-amino-acid chain: Citrullinase (286 aa).

Positions 4-258 (IKVAVVQLSF…DDILYATFDF (255 aa)) constitute a CN hydrolase domain. Catalysis depends on E43, which acts as the Proton acceptor. Residue K116 is part of the active site. The active-site Nucleophile is the C153.

The protein belongs to the carbon-nitrogen hydrolase superfamily.

The catalysed reaction is L-citrulline + H2O + 2 H(+) = L-ornithine + NH4(+) + CO2. Catalyzes the degradation of citrulline into ornithine, carbon dioxide and ammonia. Contributes to intramacrophage survival, in vivo growth and pathogenesis. The sequence is that of Citrullinase from Francisella tularensis subsp. tularensis (strain SCHU S4 / Schu 4).